The following is an 856-amino-acid chain: Alginate lyase 7 (856 aa).

PbH1 repeat units lie at residues 133–155, 157–179, 180–202, 204–226, 234–256, 257–279, 280–304, and 320–342; these read DYNV…DPHE, TINL…VADF, QIGA…NIVT, SHDI…VVQR, VYNV…LIKM, STDV…RVQG, VEDV…EVIV, and TQNV…GIQE. Hemolysin-type calcium-binding repeat units lie at residues 387–402, 404–421, 422–439, 538–549, 554–563, 565–581, 582–599, 715–731, and 733–749; these read GSTG…IADL, VGGS…NDVL, EGGA…ADIF, GTEGDDSLTGNA, LDGGSGNDSL, GGLG…DDIL, NGGL…ADIF, GGAG…DDIL, and GGSE…ADVF.

This sequence belongs to the D-mannuronate C5-epimerase family. Ca(2+) is required as a cofactor.

The protein localises to the secreted. It catalyses the reaction Eliminative cleavage of alginate to give oligosaccharides with 4-deoxy-alpha-L-erythro-hex-4-enuronosyl groups at their non-reducing ends and beta-D-mannuronate at their reducing end.. The enzyme catalyses [(1-&gt;4)-beta-D-mannuronosyl](n) = [alginate](n). It functions in the pathway glycan biosynthesis; alginate biosynthesis. With respect to regulation, inhibited by zinc. Its function is as follows. Converts beta-D-mannuronic acid (M) to alpha-L-guluronic acid (G). Has both epimerase and lyase activities. Contributes to abortive encystment by degrading the coat from inside the cyst. Important for cyst germination. The polypeptide is Alginate lyase 7 (Azotobacter vinelandii).